We begin with the raw amino-acid sequence, 38 residues long: Bacteriocin curvaticin FS47 (38 aa).

Its subcellular location is the secreted. In terms of biological role, bacteriocin active against Listeria monocytogenes, Pediococcus, Enterococcus, Lactobacilli and Bacilli. The polypeptide is Bacteriocin curvaticin FS47 (Latilactobacillus curvatus (Lactobacillus curvatus)).